The primary structure comprises 139 residues: S-adenosylmethionine decarboxylase proenzyme (139 aa).

The active-site Schiff-base intermediate with substrate; via pyruvic acid is the Ser63. Ser63 carries the pyruvic acid (Ser); by autocatalysis modification. The active-site Proton acceptor; for processing activity is the His68. Residue Cys83 is the Proton donor; for catalytic activity of the active site.

It belongs to the prokaryotic AdoMetDC family. Type 1 subfamily. In terms of assembly, heterotetramer of two alpha and two beta chains arranged as a dimer of alpha/beta heterodimers. Requires pyruvate as cofactor. Post-translationally, is synthesized initially as an inactive proenzyme. Formation of the active enzyme involves a self-maturation process in which the active site pyruvoyl group is generated from an internal serine residue via an autocatalytic post-translational modification. Two non-identical subunits are generated from the proenzyme in this reaction, and the pyruvate is formed at the N-terminus of the alpha chain, which is derived from the carboxyl end of the proenzyme. The post-translation cleavage follows an unusual pathway, termed non-hydrolytic serinolysis, in which the side chain hydroxyl group of the serine supplies its oxygen atom to form the C-terminus of the beta chain, while the remainder of the serine residue undergoes an oxidative deamination to produce ammonia and the pyruvoyl group blocking the N-terminus of the alpha chain.

The enzyme catalyses S-adenosyl-L-methionine + H(+) = S-adenosyl 3-(methylsulfanyl)propylamine + CO2. Its pathway is amine and polyamine biosynthesis; S-adenosylmethioninamine biosynthesis; S-adenosylmethioninamine from S-adenosyl-L-methionine: step 1/1. Functionally, catalyzes the decarboxylation of S-adenosylmethionine to S-adenosylmethioninamine (dcAdoMet), the propylamine donor required for the synthesis of the polyamines spermine and spermidine from the diamine putrescine. The protein is S-adenosylmethionine decarboxylase proenzyme of Pyrococcus furiosus (strain ATCC 43587 / DSM 3638 / JCM 8422 / Vc1).